We begin with the raw amino-acid sequence, 129 residues long: Tumor necrosis factor receptor superfamily member 12A (129 aa).

Residues 1 to 27 form the signal peptide; the sequence is MASAWPRSLPQILVLGFGLVLMRAAAG. Residues 28–80 are Extracellular-facing; it reads EQAPGTSPCSSGSSWSADLDKCMDCASCPARPHSDFCLGCAAAPPAHFRLLWP. 3 disulfide bridges follow: C36-C49, C52-C67, and C55-C64. The TNFR-Cys; atypical repeat unit spans residues 36–67; sequence CSSGSSWSADLDKCMDCASCPARPHSDFCLGC. Residues 81–101 form a helical membrane-spanning segment; it reads ILGGALSLVLVLALVSSFLVW. The Cytoplasmic portion of the chain corresponds to 102–129; sequence RRCRRREKFTTPIEETGGEGCPGVALIQ.

As to quaternary structure, associates with TRAF1 and TRAF2, and probably also with TRAF3. In terms of tissue distribution, highly expressed in fetal heart, intestine, kidney, liver, lung and skin, and in adult heart and ovary. Intermediate expression in adult kidney, lung and skin.

Its subcellular location is the membrane. Receptor for TNFSF12/TWEAK. Weak inducer of apoptosis in some cell types. Promotes angiogenesis and the proliferation of endothelial cells. May modulate cellular adhesion to matrix proteins. This chain is Tumor necrosis factor receptor superfamily member 12A (Tnfrsf12a), found in Mus musculus (Mouse).